We begin with the raw amino-acid sequence, 187 residues long: Elongation factor P (187 aa).

It belongs to the elongation factor P family.

Its subcellular location is the cytoplasm. Its pathway is protein biosynthesis; polypeptide chain elongation. Its function is as follows. Involved in peptide bond synthesis. Stimulates efficient translation and peptide-bond synthesis on native or reconstituted 70S ribosomes in vitro. Probably functions indirectly by altering the affinity of the ribosome for aminoacyl-tRNA, thus increasing their reactivity as acceptors for peptidyl transferase. This chain is Elongation factor P, found in Frankia casuarinae (strain DSM 45818 / CECT 9043 / HFP020203 / CcI3).